Consider the following 222-residue polypeptide: Germin-like protein subfamily 1 member 4 (222 aa).

An N-terminal signal peptide occupies residues M1 to C24. A disulfide bridge connects residues C34 and C50. N38 carries an N-linked (GlcNAc...) asparagine glycan. One can recognise a Cupin type-1 domain in the interval S64 to K215. 2 residues coordinate Mn(2+): H112 and H114. A glycan (N-linked (GlcNAc...) asparagine) is linked at N139. Residue H161 coordinates Mn(2+).

It belongs to the germin family. As to quaternary structure, oligomer (believed to be a pentamer but probably hexamer).

The protein resides in the secreted. It localises to the extracellular space. The protein localises to the apoplast. May play a role in plant defense. Probably has no oxalate oxidase activity even if the active site is conserved. The polypeptide is Germin-like protein subfamily 1 member 4 (Arabidopsis thaliana (Mouse-ear cress)).